The sequence spans 457 residues: Antizyme inhibitor 2 (457 aa).

Residues 115–138 (QVAQIKYAAKHGVRLLSFDNEVEL) form a necessary for polyamine uptake stimulation region.

Belongs to the Orn/Lys/Arg decarboxylase class-II family. ODC antizyme inhibitor subfamily. Monomer. Interacts with OAZ1, OAZ2 and OAZ3; this interaction disrupts the interaction between the antizyme and ODC1. Does not form a heterodimer with ODC1. In terms of processing, ubiquitinated, leading to its proteasomal degradation; a process that is reduced in presence of antizymes. May also be degraded through the lysosomal degradative pathway in a proteasomal-independent manner.

The protein resides in the nucleus. It localises to the cytoplasm. Its subcellular location is the perinuclear region. It is found in the membrane. The protein localises to the cytoplasmic vesicle. The protein resides in the endoplasmic reticulum-Golgi intermediate compartment. It localises to the golgi apparatus. Its subcellular location is the cis-Golgi network. It is found in the trans-Golgi network. The protein localises to the cytoplasmic granule. The protein resides in the cell projection. It localises to the axon. Its subcellular location is the dendrite. It is found in the perikaryon. Antizyme inhibitor (AZI) protein that positively regulates ornithine decarboxylase (ODC) activity and polyamine uptake. AZI is an enzymatically inactive ODC homolog that counteracts the negative effect of ODC antizymes (AZs) OAZ1, OAZ2 and OAZ3 on ODC activity by competing with ODC for antizyme-binding. Inhibits antizyme-dependent ODC degradation and releases ODC monomers from their inactive complex with antizymes, leading to formation of the catalytically active ODC homodimer and restoring polyamine production. Participates in the morphological integrity of the trans-Golgi network (TGN) and functions as a regulator of intracellular secretory vesicle trafficking. This is Antizyme inhibitor 2 (Azin2) from Rattus norvegicus (Rat).